Here is a 96-residue protein sequence, read N- to C-terminus: Protein Vpr (96 aa).

The homooligomerization stretch occupies residues 1–42 (MEQAPENQGPQREPYNEWTLELLEELKSEAVRHFPRIWLHSL). Phosphoserine; by host is present on residues Ser79, Ser94, and Ser96.

This sequence belongs to the HIV-1 VPR protein family. In terms of assembly, homooligomer, may form homodimer. Interacts with p6-gag region of the Pr55 Gag precursor protein through a (Leu-X-X)4 motif near the C-terminus of the P6gag protein. Interacts with host UNG. May interact with host RAD23A/HHR23A. Interacts with host VPRBP/DCAF1, leading to hijack the CUL4A-RBX1-DDB1-DCAF1/VPRBP complex, mediating ubiquitination of host proteins such as TERT and ZGPAT and arrest of the cell cycle in G2 phase. In terms of processing, phosphorylated on several residues by host. These phosphorylations regulate VPR activity for the nuclear import of the HIV-1 pre-integration complex.

The protein localises to the virion. It is found in the host nucleus. The protein resides in the host extracellular space. Its function is as follows. During virus replication, may deplete host UNG protein, and incude G2-M cell cycle arrest. Acts by targeting specific host proteins for degradation by the 26S proteasome, through association with the cellular CUL4A-DDB1 E3 ligase complex by direct interaction with host VPRPB/DCAF-1. Cell cycle arrest reportedly occurs within hours of infection and is not blocked by antiviral agents, suggesting that it is initiated by the VPR carried into the virion. Additionally, VPR induces apoptosis in a cell cycle dependent manner suggesting that these two effects are mechanistically linked. Detected in the serum and cerebrospinal fluid of AIDS patient, VPR may also induce cell death to bystander cells. During virus entry, plays a role in the transport of the viral pre-integration (PIC) complex to the host nucleus. This function is crucial for viral infection of non-dividing macrophages. May act directly at the nuclear pore complex, by binding nucleoporins phenylalanine-glycine (FG)-repeat regions. This Human immunodeficiency virus type 1 group M subtype B (isolate SF33) (HIV-1) protein is Protein Vpr.